The following is a 361-amino-acid chain: U7 snRNA-associated Sm-like protein LSm11 (361 aa).

The tract at residues 1 to 26 (MEEREWGARSARAGSPASPPSPRLDV) is disordered. Phosphoserine occurs at positions 15 and 21. Arg41 carries the omega-N-methylarginine modification. A disordered region spans residues 67–142 (RTGRGRARGT…QGPGRSKKAP (76 aa)). Low complexity predominate over residues 76 to 96 (TGEPASAGTSTGTSTGAGSSS). A Glycyl lysine isopeptide (Lys-Gly) (interchain with G-Cter in SUMO2) cross-link involves residue Lys121. The residue at position 155 (Ser155) is a Phosphoserine. One can recognise a Sm domain in the interval 155-230 (SPLGELHRCI…LTLTRLFDRL (76 aa)). The SM 1 stretch occupies residues 172-205 (VHIRTFKGLRGVCTGFLVAFDKFWNMALTDVDET). Positions 268–335 (RGDTDRSSHR…RKKKRKPKVD (68 aa)) are disordered. Ser281 is subject to Phosphoserine. Positions 307–323 (GSSVGGTFSRATTLSRG) are enriched in polar residues. Positions 344–357 (INQIFIRGENVLLV) are SM 2.

Belongs to the snRNP Sm proteins family. As to quaternary structure, component of the heptameric ring U7 snRNP complex, or U7 Sm protein core complex, at least composed of LSM10, LSM11, SNRPB, SNRPD3, SNRPE, SNRPF, SNRPG and U7 snRNA. Formation of the U7 snRNP is an ATP-dependent process mediated by a specialized SMN complex containing at least the Sm protein core complex and additionally, the U7-specific LSM10 and LSM11 proteins. Identified in a histone pre-mRNA complex, at least composed of ERI1, LSM11, SLBP, SNRPB, SYNCRIP and YBX1. Interacts (via the Sm domains) with CLNS1A. Interacts with PRMT5, SMN, ZNF473 and WDR77. In terms of processing, not methylated.

It localises to the nucleus. In terms of biological role, component of the U7 snRNP complex that is involved in the histone 3'-end pre-mRNA processing. Increases U7 snRNA levels but not histone 3'-end pre-mRNA processing activity, when overexpressed. Required for cell cycle progression from G1 to S phases. Binds specifically to the Sm-binding site of U7 snRNA. This is U7 snRNA-associated Sm-like protein LSm11 from Mus musculus (Mouse).